A 487-amino-acid chain; its full sequence is 6-phosphogluconate dehydrogenase, decarboxylating 3, chloroplastic (487 aa).

Met1 is subject to N-acetylmethionine. Residues 13-18 (GLAVMG), 36-38 (NRT), 80-82 (VKA), and Asn108 contribute to the NADP(+) site. Residues Asn108 and 134–136 (SGG) contribute to the substrate site. The Proton acceptor role is filled by Lys188. 191–192 (HN) is a binding site for substrate. Glu195 serves as the catalytic Proton donor. Substrate is bound by residues Tyr196, Lys266, Arg293, Arg458, and His464.

The protein belongs to the 6-phosphogluconate dehydrogenase family. In terms of assembly, forms homodimer. Forms heterodimers with PGD1 or PGD2.

Its subcellular location is the plastid. The protein localises to the chloroplast. It localises to the cytoplasm. It is found in the cytosol. The enzyme catalyses 6-phospho-D-gluconate + NADP(+) = D-ribulose 5-phosphate + CO2 + NADPH. Its pathway is carbohydrate degradation; pentose phosphate pathway; D-ribulose 5-phosphate from D-glucose 6-phosphate (oxidative stage): step 3/3. Functionally, catalyzes the oxidative decarboxylation of 6-phosphogluconate to ribulose 5-phosphate and CO(2), with concomitant reduction of NADP to NADPH. In Arabidopsis thaliana (Mouse-ear cress), this protein is 6-phosphogluconate dehydrogenase, decarboxylating 3, chloroplastic.